Reading from the N-terminus, the 3054-residue chain is Genome polyprotein (3054 aa).

The Peptidase S30 domain maps to 163-304 (FLPATSLSNV…FAVCHSMTHY (142 aa)). Active-site for P1 proteinase activity residues include His-214, Asp-223, and Ser-256. An Involved in interaction with stylet and aphid transmission motif is present at residues 358 to 361 (KITC). The short motif at 615–617 (PTK) is the Involved in virions binding and aphid transmission element. The Peptidase C6 domain maps to 641–763 (MYIANEGYCY…ESEMKTYNVG (123 aa)). Residues Cys-649 and His-722 each act as for helper component proteinase activity in the active site. One can recognise a Helicase ATP-binding domain in the interval 1234–1386 (EISHSPARDF…TQFPVKLKIE (153 aa)). 1247–1254 (GAVGSGKS) contributes to the ATP binding site. A DECH box motif is present at residues 1336-1339 (DECH). The region spanning 1401 to 1564 (GANADVISCG…NLPVTTQSVS (164 aa)) is the Helicase C-terminal domain. A Nuclear localization signal motif is present at residues 1889 to 1896 (NKGKRKGT). Residue Tyr-1911 is modified to O-(5'-phospho-RNA)-tyrosine. The Peptidase C4 domain occupies 2038–2255 (GESLFKGPRD…VLWGGHKVFM (218 aa)). Residues His-2083, Asp-2118, and Cys-2188 each act as for nuclear inclusion protein A activity in the active site. Residues 2521-2641 (WVYCDADGSQ…AIHPDKAERL (121 aa)) enclose the RdRp catalytic domain. The segment at 2798–2827 (GADAGKKKDQKDDKVAEQASKDRDVNAGTS) is disordered. The span at 2801–2822 (AGKKKDQKDDKVAEQASKDRDV) shows a compositional bias: basic and acidic residues. Phosphothreonine is present on Thr-3038.

Belongs to the potyviridae genome polyprotein family. In terms of assembly, interacts with host eIF4E protein (via cap-binding region); this interaction mediates the translation of the VPg-viral RNA conjugates. Part of a complex that comprises VPg, RNA, host EIF4E and EIF4G; this interaction mediates the translation of the VPg-viral RNA conjugates. Interaction is possible in susceptible hosts but impaired in resistant plants: the VPg of strain HAT interacts with tomato eIF4E1 and eIF4E2 as well as with Capsicum annuum eIF4E1 susceptible alleles pvr2(+), pvr2(3) and pvr2(9) but not with the resistant allele pvr2(2), the VPg of strain CAA10 interacts with C.annuum eIF4E1 susceptible alleles pvr2(+), pvr2(2), pvr2(3) and pvr2(9), the VPg of strain NW interacts at least with C.annuum eIF4E1. As to quaternary structure, homodimer; disulfide-linked. In terms of processing, VPg is uridylylated by the polymerase and is covalently attached to the 5'-end of the genomic RNA. This uridylylated form acts as a nucleotide-peptide primer for the polymerase. Post-translationally, potyviral RNA is expressed as two polyproteins which undergo post-translational proteolytic processing. Genome polyprotein is processed by NIa-pro, P1 and HC-pro proteinases resulting in the production of at least ten individual proteins. P3N-PIPO polyprotein is cleaved by P1 and HC-pro proteinases resulting in the production of three individual proteins. The P1 proteinase and the HC-pro cleave only their respective C-termini autocatalytically. 6K1 is essential for proper proteolytic separation of P3 from CI.

It is found in the host cytoplasmic vesicle. The protein localises to the host nucleus. It localises to the virion. It catalyses the reaction RNA(n) + a ribonucleoside 5'-triphosphate = RNA(n+1) + diphosphate. The catalysed reaction is Hydrolyzes glutaminyl bonds, and activity is further restricted by preferences for the amino acids in P6 - P1' that vary with the species of potyvirus, e.g. Glu-Xaa-Xaa-Tyr-Xaa-Gln-|-(Ser or Gly) for the enzyme from tobacco etch virus. The natural substrate is the viral polyprotein, but other proteins and oligopeptides containing the appropriate consensus sequence are also cleaved.. It carries out the reaction Hydrolyzes a Gly-|-Gly bond at its own C-terminus, commonly in the sequence -Tyr-Xaa-Val-Gly-|-Gly, in the processing of the potyviral polyprotein.. Required for aphid transmission and also has proteolytic activity. Only cleaves a Gly-Gly dipeptide at its own C-terminus. Interacts with virions and aphid stylets. Acts as a suppressor of RNA-mediated gene silencing, also known as post-transcriptional gene silencing (PTGS), a mechanism of plant viral defense that limits the accumulation of viral RNAs. May have RNA-binding activity. In terms of biological role, has helicase activity. It may be involved in replication. Its function is as follows. Indispensable for virus replication. Reduces the abundance of host transcripts related to jasmonic acid biosynthesis therefore altering the host defenses. In order to increase its own stability, decreases host protein degradation pathways. Functionally, indispensable for virus replication. Mediates the cap-independent, EIF4E-dependent translation of viral genomic RNAs. Binds to the cap-binding site of host EIF4E and thus interferes with the host EIF4E-dependent mRNA export and translation. VPg-RNA directly binds EIF4E and is a template for transcription. Also forms trimeric complexes with EIF4E-EIF4G, which are templates for translation. In terms of biological role, has RNA-binding and proteolytic activities. Its function is as follows. An RNA-dependent RNA polymerase that plays an essential role in the virus replication. Functionally, involved in aphid transmission, cell-to-cell and systemis movement, encapsidation of the viral RNA and in the regulation of viral RNA amplification. In Capsicum annuum (Capsicum pepper), this protein is Genome polyprotein.